The primary structure comprises 129 residues: Small ribosomal subunit protein uS11 (129 aa).

This sequence belongs to the universal ribosomal protein uS11 family. Part of the 30S ribosomal subunit. Interacts with proteins S7 and S18. Binds to IF-3.

Functionally, located on the platform of the 30S subunit, it bridges several disparate RNA helices of the 16S rRNA. Forms part of the Shine-Dalgarno cleft in the 70S ribosome. This is Small ribosomal subunit protein uS11 from Nitratidesulfovibrio vulgaris (strain DSM 19637 / Miyazaki F) (Desulfovibrio vulgaris).